The chain runs to 280 residues: Probable ketoamine kinase lp_1983 (280 aa).

87 to 89 lines the ATP pocket; it reads DWL. The active-site Proton acceptor is the aspartate 189.

This sequence belongs to the fructosamine kinase family.

The catalysed reaction is N(6)-(D-ribulosyl)-L-lysine + ATP = N(6)-(3-O-phospho-D-ribulosyl)-L-lysine + ADP + H(+). It carries out the reaction N-(D-ribulosyl)-cadaverine + ATP = N-(3-O-phospho-D-ribulosyl)-cadaverine + ADP + H(+). It catalyses the reaction N(6)-(D-erythrulosyl)-L-lysine + ATP = N(6)-(3-O-phospho-D-erythrulosyl)-L-lysine + ADP + H(+). The enzyme catalyses N-(D-erythrulosyl)-cadaverine + ATP = N-(3-O-phospho-D-erythrulosyl)-cadaverine + ADP + H(+). The catalysed reaction is N(6)-D-ribulosyl-L-lysyl-[protein] + ATP = N(6)-(3-O-phospho-D-ribulosyl)-L-lysyl-[protein] + ADP + H(+). It carries out the reaction N(6)-(D-erythrulosyl)-L-lysyl-[protein] + ATP = N(6)-(3-O-phospho-D-erythrulosyl)-L-lysyl-[protein] + ADP + H(+). In terms of biological role, ketoamine kinase that phosphorylates ketoamines, such as erythruloselysine, erythrulosecadaverine, ribuloselysine and ribulosecadaverine, on the third carbon of the sugar moiety to generate ketoamine 3-phosphate. Has higher activity on free lysine (erythruloselysine and ribuloselysine), than on ribuloselysine and erythruloselysine residues on glycated proteins. The polypeptide is Probable ketoamine kinase lp_1983 (Lactiplantibacillus plantarum (strain ATCC BAA-793 / NCIMB 8826 / WCFS1) (Lactobacillus plantarum)).